A 267-amino-acid polypeptide reads, in one-letter code: MSLFTLFLLALVQGITEFLPISSSGHLILLPNLLGIEDQGQAIDVAVHVGTLGAVILYFWRDVKAAIAGTPRLLTGRIDTPGAKLAFLLIIATIPVIIFGLFLEVTGIYDSLRSIAVIGWTMLIFGLVLYWADQRGGTEKQSDDWSLRDAVTMGLWQAVALIPGTSRSGITITAARFLGYDRESAARVAMLMSIPTIIATGVFAGAEVIATADAQTARDGAIAAALSFLAALAALTLMFRLLKSVSFTPYVIYRVILGVILLVIAYA.

7 helical membrane passes run 1–21 (MSLF…FLPI), 40–60 (GQAI…LYFW), 85–105 (LAFL…FLEV), 112–132 (LRSI…LYWA), 189–209 (AMLM…AEVI), 219–239 (DGAI…TLMF), and 245–265 (VSFT…LVIA).

Belongs to the UppP family.

Its subcellular location is the cell inner membrane. It carries out the reaction di-trans,octa-cis-undecaprenyl diphosphate + H2O = di-trans,octa-cis-undecaprenyl phosphate + phosphate + H(+). Catalyzes the dephosphorylation of undecaprenyl diphosphate (UPP). Confers resistance to bacitracin. This Jannaschia sp. (strain CCS1) protein is Undecaprenyl-diphosphatase.